The sequence spans 488 residues: ATP synthase subunit beta (488 aa).

164 to 171 is a binding site for ATP; the sequence is GGAGVGKT.

This sequence belongs to the ATPase alpha/beta chains family. F-type ATPases have 2 components, CF(1) - the catalytic core - and CF(0) - the membrane proton channel. CF(1) has five subunits: alpha(3), beta(3), gamma(1), delta(1), epsilon(1). CF(0) has four main subunits: a(1), b(1), b'(1) and c(9-12).

It localises to the cellular thylakoid membrane. It catalyses the reaction ATP + H2O + 4 H(+)(in) = ADP + phosphate + 5 H(+)(out). Functionally, produces ATP from ADP in the presence of a proton gradient across the membrane. The catalytic sites are hosted primarily by the beta subunits. The polypeptide is ATP synthase subunit beta (Prochlorococcus marinus (strain SARG / CCMP1375 / SS120)).